Here is a 513-residue protein sequence, read N- to C-terminus: ATP synthase subunit alpha (513 aa).

169–176 (GDRQTGKT) is an ATP binding site.

The protein belongs to the ATPase alpha/beta chains family. In terms of assembly, F-type ATPases have 2 components, CF(1) - the catalytic core - and CF(0) - the membrane proton channel. CF(1) has five subunits: alpha(3), beta(3), gamma(1), delta(1), epsilon(1). CF(0) has three main subunits: a(1), b(2) and c(9-12). The alpha and beta chains form an alternating ring which encloses part of the gamma chain. CF(1) is attached to CF(0) by a central stalk formed by the gamma and epsilon chains, while a peripheral stalk is formed by the delta and b chains.

It localises to the cell inner membrane. It carries out the reaction ATP + H2O + 4 H(+)(in) = ADP + phosphate + 5 H(+)(out). Functionally, produces ATP from ADP in the presence of a proton gradient across the membrane. The alpha chain is a regulatory subunit. This Polynucleobacter necessarius subsp. necessarius (strain STIR1) protein is ATP synthase subunit alpha.